Reading from the N-terminus, the 645-residue chain is DNA mismatch repair protein MutL (645 aa).

This sequence belongs to the DNA mismatch repair MutL/HexB family.

This protein is involved in the repair of mismatches in DNA. It is required for dam-dependent methyl-directed DNA mismatch repair. May act as a 'molecular matchmaker', a protein that promotes the formation of a stable complex between two or more DNA-binding proteins in an ATP-dependent manner without itself being part of a final effector complex. This is DNA mismatch repair protein MutL from Pediococcus pentosaceus (strain ATCC 25745 / CCUG 21536 / LMG 10740 / 183-1w).